The primary structure comprises 468 residues: Uronate isomerase (468 aa).

This sequence belongs to the metallo-dependent hydrolases superfamily. Uronate isomerase family.

The enzyme catalyses D-glucuronate = D-fructuronate. It carries out the reaction aldehydo-D-galacturonate = keto-D-tagaturonate. It functions in the pathway carbohydrate metabolism; pentose and glucuronate interconversion. In Bacteroides fragilis (strain ATCC 25285 / DSM 2151 / CCUG 4856 / JCM 11019 / LMG 10263 / NCTC 9343 / Onslow / VPI 2553 / EN-2), this protein is Uronate isomerase.